Here is a 173-residue protein sequence, read N- to C-terminus: Alpha-crystallin A chain (173 aa).

Met-1 carries the N-acetylmethionine modification. The required for complex formation with BFSP1 and BFSP2 stretch occupies residues 1-63 (MDVTIQHPWF…RTVLDSGVSE (63 aa)). Gln-6 bears the Deamidated glutamine; partial mark. Ser-45 carries the phosphoserine modification. Gln-50 bears the Deamidated glutamine; partial mark. Residues 52–162 (LFRTVLDSGV…GHSERAIPVS (111 aa)) enclose the sHSP domain. Residue Lys-70 is modified to N6-acetyllysine. Gln-90 is modified (deamidated glutamine; partial). The residue at position 99 (Lys-99) is an N6-acetyllysine. Position 100 (His-100) interacts with Zn(2+). Position 101 is a deamidated asparagine; partial (Asn-101). Glu-102 and His-107 together coordinate Zn(2+). Ser-122 is modified (phosphoserine). Position 123 is a deamidated asparagine; partial (Asn-123). Positions 144-173 (PKVQSGLDAGHSERAIPVSREEKPSSAPSS) are disordered. At Gln-147 the chain carries Deamidated glutamine; partial. A compositionally biased stretch (basic and acidic residues) spans 153-167 (GHSERAIPVSREEKP). Position 154 (His-154) interacts with Zn(2+). An O-linked (GlcNAc) serine glycan is attached at Ser-162.

This sequence belongs to the small heat shock protein (HSP20) family. In terms of assembly, heteromer composed of three CRYAA and one CRYAB subunits. Inter-subunit bridging via zinc ions enhances stability, which is crucial as there is no protein turn over in the lens. Can also form homodimers and homotetramers (dimers of dimers) which serve as the building blocks of homooligomers. Within homooligomers, the zinc-binding motif is created from residues of 3 different molecules. His-100 and Glu-102 from one molecule are ligands of the zinc ion, and His-107 and His-154 residues from additional molecules complete the site with tetrahedral coordination geometry. Part of a complex required for lens intermediate filament formation composed of BFSP1, BFSP2 and CRYAA. Acetylation at Lys-70 may increase chaperone activity. Post-translationally, undergoes age-dependent proteolytical cleavage at the C-terminus.

The protein localises to the cytoplasm. Its subcellular location is the nucleus. Contributes to the transparency and refractive index of the lens. Acts as a chaperone, preventing aggregation of various proteins under a wide range of stress conditions. Required for the correct formation of lens intermediate filaments as part of a complex composed of BFSP1, BFSP2 and CRYAA. The polypeptide is Alpha-crystallin A chain (CRYAA) (Otolemur crassicaudatus (Brown greater galago)).